Reading from the N-terminus, the 461-residue chain is Deoxyguanosinetriphosphate triphosphohydrolase-like protein (461 aa).

Residues 22–41 form a disordered region; the sequence is ERFLPDPPREKDNRPPFRRD. Basic and acidic residues predominate over residues 24–41; that stretch reads FLPDPPREKDNRPPFRRD. One can recognise an HD domain in the interval 72–285; sequence RLTHSLEVAQ…MELADDIAYG (214 aa).

The protein belongs to the dGTPase family. Type 2 subfamily.

This Haemophilus influenzae (strain PittEE) protein is Deoxyguanosinetriphosphate triphosphohydrolase-like protein.